Consider the following 404-residue polypeptide: Probable tRNA sulfurtransferase (404 aa).

The 106-residue stretch at 61 to 166 (EAVSERLKDV…SGYSYIMCDE (106 aa)) folds into the THUMP domain. Residues 184–185 (LL), 209–210 (HF), arginine 266, glycine 288, and glutamine 297 each bind ATP.

It belongs to the ThiI family.

The protein localises to the cytoplasm. It catalyses the reaction [ThiI sulfur-carrier protein]-S-sulfanyl-L-cysteine + a uridine in tRNA + 2 reduced [2Fe-2S]-[ferredoxin] + ATP + H(+) = [ThiI sulfur-carrier protein]-L-cysteine + a 4-thiouridine in tRNA + 2 oxidized [2Fe-2S]-[ferredoxin] + AMP + diphosphate. It carries out the reaction [ThiS sulfur-carrier protein]-C-terminal Gly-Gly-AMP + S-sulfanyl-L-cysteinyl-[cysteine desulfurase] + AH2 = [ThiS sulfur-carrier protein]-C-terminal-Gly-aminoethanethioate + L-cysteinyl-[cysteine desulfurase] + A + AMP + 2 H(+). The protein operates within cofactor biosynthesis; thiamine diphosphate biosynthesis. Functionally, catalyzes the ATP-dependent transfer of a sulfur to tRNA to produce 4-thiouridine in position 8 of tRNAs, which functions as a near-UV photosensor. Also catalyzes the transfer of sulfur to the sulfur carrier protein ThiS, forming ThiS-thiocarboxylate. This is a step in the synthesis of thiazole, in the thiamine biosynthesis pathway. The sulfur is donated as persulfide by IscS. This chain is Probable tRNA sulfurtransferase, found in Bacillus cereus (strain ATCC 14579 / DSM 31 / CCUG 7414 / JCM 2152 / NBRC 15305 / NCIMB 9373 / NCTC 2599 / NRRL B-3711).